A 271-amino-acid chain; its full sequence is Hydroxyethylthiazole kinase (271 aa).

A substrate-binding site is contributed by Met-50. Arg-126 and Thr-172 together coordinate ATP. Substrate is bound at residue Gly-199.

Belongs to the Thz kinase family. Mg(2+) is required as a cofactor.

It carries out the reaction 5-(2-hydroxyethyl)-4-methylthiazole + ATP = 4-methyl-5-(2-phosphooxyethyl)-thiazole + ADP + H(+). It functions in the pathway cofactor biosynthesis; thiamine diphosphate biosynthesis; 4-methyl-5-(2-phosphoethyl)-thiazole from 5-(2-hydroxyethyl)-4-methylthiazole: step 1/1. Functionally, catalyzes the phosphorylation of the hydroxyl group of 4-methyl-5-beta-hydroxyethylthiazole (THZ). The sequence is that of Hydroxyethylthiazole kinase from Akkermansia muciniphila (strain ATCC BAA-835 / DSM 22959 / JCM 33894 / BCRC 81048 / CCUG 64013 / CIP 107961 / Muc).